The sequence spans 466 residues: Asparagine--tRNA ligase (466 aa).

It belongs to the class-II aminoacyl-tRNA synthetase family. As to quaternary structure, homodimer.

The protein resides in the cytoplasm. The catalysed reaction is tRNA(Asn) + L-asparagine + ATP = L-asparaginyl-tRNA(Asn) + AMP + diphosphate + H(+). The protein is Asparagine--tRNA ligase of Shewanella amazonensis (strain ATCC BAA-1098 / SB2B).